The chain runs to 1198 residues: DNA polymerase (1198 aa).

3 disordered regions span residues 1–90 (MALV…TVVA), 179–198 (LEQP…QPNP), and 906–931 (ALAD…PSGT). Residues 30 to 40 (QQPPRAAPAPA) show a composition bias toward low complexity.

The protein belongs to the DNA polymerase type-B family. As to quaternary structure, heterodimer with the terminal protein; this heterodimer binds to bp 9 to 18 of the genome. Forms a complex with viral pTP, DBP and hosts NFIA and POU2F1/OCT1 for initiation of replication.

It localises to the host nucleus. It catalyses the reaction DNA(n) + a 2'-deoxyribonucleoside 5'-triphosphate = DNA(n+1) + diphosphate. In terms of biological role, eukaryotic-type DNA polymerase involved in viral genomic replication. DNA synthesis is protein primed, and acts in a strand displacement replication. Assembles in complex with viral pTP, DBP, host NFIA and host POU2F1/OCT1 on viral origin of replication. The polymerase covalently transfers dCMP onto pTP, thereby initiating complementary strand synthesis. This is DNA polymerase from Homo sapiens (Human).